We begin with the raw amino-acid sequence, 98 residues long: NADH-ubiquinone oxidoreductase chain 4L (98 aa).

The next 3 helical transmembrane spans lie at 1 to 21, 26 to 46, and 61 to 81; these read MSPIFINITLAFTISLLGMLV, LMASLLCLEGMMMSLFITIAL, and ITLLVFAACETAVGLALLVSI.

The protein belongs to the complex I subunit 4L family. As to quaternary structure, core subunit of respiratory chain NADH dehydrogenase (Complex I) which is composed of 45 different subunits.

It localises to the mitochondrion inner membrane. The catalysed reaction is a ubiquinone + NADH + 5 H(+)(in) = a ubiquinol + NAD(+) + 4 H(+)(out). Functionally, core subunit of the mitochondrial membrane respiratory chain NADH dehydrogenase (Complex I) which catalyzes electron transfer from NADH through the respiratory chain, using ubiquinone as an electron acceptor. Part of the enzyme membrane arm which is embedded in the lipid bilayer and involved in proton translocation. This is NADH-ubiquinone oxidoreductase chain 4L (MT-ND4L) from Chlorocebus aethiops (Green monkey).